Here is a 487-residue protein sequence, read N- to C-terminus: WD-40 repeat-containing protein MSI5 (487 aa).

Position 1 is an N-acetylmethionine (Met1). Positions 1–12 (MESEAAATVQAT) are enriched in low complexity. The segment at 1-44 (MESEAAATVQATRPRRAPRTPVTAILTDKRRRKPKSNNESQLPF) is disordered. The Nuclear localization signal signature appears at 14–21 (PRRAPRTP). WD repeat units lie at residues 142–182 (IHPG…DRYA), 197–237 (GHQD…TMAG), 270–310 (GHKD…SPAM), 315–355 (AHDA…SNGV), 364–404 (GHRA…KKSE), and 419–466 (GHRD…YRPE). The tract at residues 236–268 (AGSDSKSPGSSFKQTGEGSDKTGGPSVGPRGIY) is disordered. Positions 237 to 252 (GSDSKSPGSSFKQTGE) are enriched in polar residues. The short motif at 288–303 (FCSVGDDSCLMLWDAR) is the DWD box element.

The protein belongs to the WD repeat RBAP46/RBAP48/MSI1 family. As to quaternary structure, interacts with AHL16. Interacts with LHP1, PDP2, PDP3 and PDP6. Component of the PRC2 (polycomb repressive complex 2) complex which regulates histone methylation on histone H3K27.

The protein localises to the nucleus. Functionally, core histone-binding subunit that may target chromatin assembly factors, chromatin remodeling factors and histone deacetylases to their histone substrates in a manner that is regulated by nucleosomal DNA. Acts together with PDP1 and MSI4/FVE to regulate the function of the PRC2 complex on FLC. The protein is WD-40 repeat-containing protein MSI5 of Arabidopsis thaliana (Mouse-ear cress).